The following is a 173-amino-acid chain: Crossover junction endodeoxyribonuclease RuvC (173 aa).

Active-site residues include aspartate 8, glutamate 67, and aspartate 139. Positions 8, 67, and 139 each coordinate Mg(2+).

The protein belongs to the RuvC family. In terms of assembly, homodimer which binds Holliday junction (HJ) DNA. The HJ becomes 2-fold symmetrical on binding to RuvC with unstacked arms; it has a different conformation from HJ DNA in complex with RuvA. In the full resolvosome a probable DNA-RuvA(4)-RuvB(12)-RuvC(2) complex forms which resolves the HJ. The cofactor is Mg(2+).

It localises to the cytoplasm. It catalyses the reaction Endonucleolytic cleavage at a junction such as a reciprocal single-stranded crossover between two homologous DNA duplexes (Holliday junction).. The RuvA-RuvB-RuvC complex processes Holliday junction (HJ) DNA during genetic recombination and DNA repair. Endonuclease that resolves HJ intermediates. Cleaves cruciform DNA by making single-stranded nicks across the HJ at symmetrical positions within the homologous arms, yielding a 5'-phosphate and a 3'-hydroxyl group; requires a central core of homology in the junction. The consensus cleavage sequence is 5'-(A/T)TT(C/G)-3'. Cleavage occurs on the 3'-side of the TT dinucleotide at the point of strand exchange. HJ branch migration catalyzed by RuvA-RuvB allows RuvC to scan DNA until it finds its consensus sequence, where it cleaves and resolves the cruciform DNA. The polypeptide is Crossover junction endodeoxyribonuclease RuvC (Salmonella agona (strain SL483)).